Reading from the N-terminus, the 797-residue chain is Homoaconitase, mitochondrial (797 aa).

The transit peptide at 1–47 (MVARFVPSAMTVLVARRGLAMASTRRGWRGLAVNLKPAAGRQWRQAY) directs the protein to the mitochondrion. [4Fe-4S] cluster is bound by residues cysteine 404, cysteine 471, and cysteine 474.

Belongs to the aconitase/IPM isomerase family. The cofactor is [4Fe-4S] cluster.

It is found in the mitochondrion. It catalyses the reaction (2R,3S)-homoisocitrate = cis-homoaconitate + H2O. It functions in the pathway amino-acid biosynthesis; L-lysine biosynthesis via AAA pathway; L-alpha-aminoadipate from 2-oxoglutarate: step 3/5. Catalyzes the reversible hydration of cis-homoaconitate to (2R,3S)-homoisocitrate, a step in the alpha-aminoadipate pathway for lysine biosynthesis. This chain is Homoaconitase, mitochondrial (LYS4), found in Chaetomium globosum (strain ATCC 6205 / CBS 148.51 / DSM 1962 / NBRC 6347 / NRRL 1970) (Soil fungus).